Reading from the N-terminus, the 155-residue chain is MSTPTQSLQVKLLDPRFGDLWPLPAYATESSAGMDLRAALEAPMTLQPGDAALIPSGIAIHLADPQLCAVILPRSGLGHRHGIVLGNGTGLIDADYQGPLLISTWNRGREAFTIEPGDRIAQLVILPIVRAGLQVVDTFVDSARGAGGFGHTGVR.

Substrate-binding positions include 74-76 (RSG), Asn87, and 91-93 (LID).

It belongs to the dUTPase family. It depends on Mg(2+) as a cofactor.

It catalyses the reaction dUTP + H2O = dUMP + diphosphate + H(+). It functions in the pathway pyrimidine metabolism; dUMP biosynthesis; dUMP from dCTP (dUTP route): step 2/2. Functionally, this enzyme is involved in nucleotide metabolism: it produces dUMP, the immediate precursor of thymidine nucleotides and it decreases the intracellular concentration of dUTP so that uracil cannot be incorporated into DNA. This is Deoxyuridine 5'-triphosphate nucleotidohydrolase from Xanthomonas oryzae pv. oryzae (strain MAFF 311018).